We begin with the raw amino-acid sequence, 478 residues long: tRNA (guanine-N(7)-)-methyltransferase non-catalytic subunit TRM82 (478 aa).

WD repeat units lie at residues 14-53, 73-113, 217-258, and 263-301; these read SSADGAAWTLFGASGSKIVVQSSNGVASVWSRQAVQVLDP, EQKF…GLQQ, GHVS…HIIE, and GHEEFVSRLCVTRSGLLVSGGGDAHLLVWDWRNFLLNEK.

Belongs to the WD repeat TRM82 family. In terms of assembly, forms a heterodimer with the catalytic subunit TRM8.

The protein resides in the nucleus. The protein operates within tRNA modification; N(7)-methylguanine-tRNA biosynthesis. Required for the formation of N(7)-methylguanine at position 46 (m7G46) in tRNA. In the complex, it is required to stabilize and induce conformational changes of the catalytic subunit. This chain is tRNA (guanine-N(7)-)-methyltransferase non-catalytic subunit TRM82, found in Phaeosphaeria nodorum (strain SN15 / ATCC MYA-4574 / FGSC 10173) (Glume blotch fungus).